Consider the following 682-residue polypeptide: L-type lectin-domain containing receptor kinase VI.2 (682 aa).

The first 26 residues, 1-26, serve as a signal peptide directing secretion; that stretch reads MGTQRSMFIVSFLFKLFLFLSVHVRA. At 27–310 the chain is on the extracellular side; sequence QRTTTNFAFR…AKKEGLNSQV (284 aa). A legume-lectin like region spans residues 29–277; sequence TTTNFAFRGF…AHYVMGWSFS (249 aa). The helical transmembrane segment at 311 to 331 threads the bilayer; sequence IVMIVALSAVMLVMLVLLFFF. Residues 332-682 are Cytoplasmic-facing; it reads VMYKKRLGQE…RVSSTSRISQ (351 aa). A Protein kinase domain is found at 367–641; sequence FKKTGIIGTG…LRYLNGEENV (275 aa). ATP contacts are provided by residues 373–381 and lysine 395; that span reads IGTGGFGTV. Aspartate 494 serves as the catalytic Proton acceptor.

It in the C-terminal section; belongs to the protein kinase superfamily. Ser/Thr protein kinase family. In the N-terminal section; belongs to the leguminous lectin family. Strongly expressed in the vascular system and trichomes of the leaves. Also expressed in guard cells, anthers, stigmas and germinating seeds, but not found in petals or roots. Increased susceptibility to the bacteria Pseudomonas syringae, characterized by stronger necrotic symptoms and higher bacterial proliferation.

It is found in the cell membrane. It catalyses the reaction L-seryl-[protein] + ATP = O-phospho-L-seryl-[protein] + ADP + H(+). The enzyme catalyses L-threonyl-[protein] + ATP = O-phospho-L-threonyl-[protein] + ADP + H(+). Involved in negative regulation of abscisic acid response in seed germination. Functionally, involved in resistance response to the pathogenic bacteria Pseudomonas syringae. The protein is L-type lectin-domain containing receptor kinase VI.2 of Arabidopsis thaliana (Mouse-ear cress).